Reading from the N-terminus, the 106-residue chain is uncharacterized protein (106 aa).

The protein resides in the mitochondrion. This is an uncharacterized protein from Arabidopsis thaliana (Mouse-ear cress).